The following is a 154-amino-acid chain: UPF0756 membrane protein YtwI (154 aa).

4 helical membrane-spanning segments follow: residues 8–28, 54–74, 87–107, and 117–137; these read FLIL…LFAV, WGVT…EIGF, WIAL…LTLL, and LVIG…GPLI.

It belongs to the UPF0756 family.

The protein localises to the cell membrane. The polypeptide is UPF0756 membrane protein YtwI (ytwI) (Bacillus subtilis (strain 168)).